The following is a 264-amino-acid chain: Indole-3-glycerol phosphate synthase (264 aa).

The protein belongs to the TrpC family.

The catalysed reaction is 1-(2-carboxyphenylamino)-1-deoxy-D-ribulose 5-phosphate + H(+) = (1S,2R)-1-C-(indol-3-yl)glycerol 3-phosphate + CO2 + H2O. Its pathway is amino-acid biosynthesis; L-tryptophan biosynthesis; L-tryptophan from chorismate: step 4/5. This Carboxydothermus hydrogenoformans (strain ATCC BAA-161 / DSM 6008 / Z-2901) protein is Indole-3-glycerol phosphate synthase.